The primary structure comprises 447 residues: C4-dicarboxylate transport protein (447 aa).

Transmembrane regions (helical) follow at residues 13–33 (SLYFQVITAIVIGVLLGHYWP), 49–69 (LIKMIIAPIIFCTVVVGIAGM), 81–101 (LALLYFEVVSTLALLLGLLIV), 149–169 (AFAKGEMLQVLLFSVMFGFAL), 189–209 (VLFAIVGFIMKVAPIGAFGAM), 227–247 (LMGTFYATCLVFIFGVLGLIA), 302–322 (GYSFNLDGTSIYLTMAAVFIA), 336–356 (TLLAVLLLTSKGAAGVTGSGF), and 357–377 (IVLAATLSAVGGVPVAGLALI). A disordered region spans residues 422–447 (ETEAEANEPEAVLDEIDQHMPVPAAR). Residues 425–436 (AEANEPEAVLDE) are compositionally biased toward acidic residues.

The protein belongs to the dicarboxylate/amino acid:cation symporter (DAACS) (TC 2.A.23) family.

It is found in the cell inner membrane. Its function is as follows. Responsible for the transport of dicarboxylates such as succinate, fumarate, and malate from the periplasm across the membrane. This is C4-dicarboxylate transport protein from Leptothrix cholodnii (strain ATCC 51168 / LMG 8142 / SP-6) (Leptothrix discophora (strain SP-6)).